The chain runs to 403 residues: Argininosuccinate synthase (403 aa).

ATP contacts are provided by residues 13 to 21 (AYSGGLDTS) and Ala-40. 2 residues coordinate L-citrulline: Tyr-91 and Ser-96. Gly-121 provides a ligand contact to ATP. Residues Thr-123, Asn-127, and Asp-128 each contribute to the L-aspartate site. Asn-127 contacts L-citrulline. Residues Arg-131, Ser-180, Ser-189, Glu-265, and Tyr-277 each contribute to the L-citrulline site.

Belongs to the argininosuccinate synthase family. Type 1 subfamily. As to quaternary structure, homotetramer.

The protein localises to the cytoplasm. It carries out the reaction L-citrulline + L-aspartate + ATP = 2-(N(omega)-L-arginino)succinate + AMP + diphosphate + H(+). It participates in amino-acid biosynthesis; L-arginine biosynthesis; L-arginine from L-ornithine and carbamoyl phosphate: step 2/3. The sequence is that of Argininosuccinate synthase from Leptospira interrogans serogroup Icterohaemorrhagiae serovar copenhageni (strain Fiocruz L1-130).